The sequence spans 375 residues: tRNA-specific 2-thiouridylase MnmA (375 aa).

ATP is bound by residues 20 to 27 (AMSGGVDS) and L46. Catalysis depends on C114, which acts as the Nucleophile. An intrachain disulfide couples C114 to C211. G138 contacts ATP. The tract at residues 160–162 (RDQ) is interaction with tRNA. The Cysteine persulfide intermediate role is filled by C211.

It belongs to the MnmA/TRMU family.

Its subcellular location is the cytoplasm. The catalysed reaction is S-sulfanyl-L-cysteinyl-[protein] + uridine(34) in tRNA + AH2 + ATP = 2-thiouridine(34) in tRNA + L-cysteinyl-[protein] + A + AMP + diphosphate + H(+). Catalyzes the 2-thiolation of uridine at the wobble position (U34) of tRNA, leading to the formation of s(2)U34. The protein is tRNA-specific 2-thiouridylase MnmA of Ruegeria pomeroyi (strain ATCC 700808 / DSM 15171 / DSS-3) (Silicibacter pomeroyi).